A 522-amino-acid chain; its full sequence is F-box-like/WD repeat-containing protein TBL1Y (522 aa).

The residue at position 2 (Ser2) is an N-acetylserine. Positions 4–36 constitute a LisH domain; it reads TSDEVNFLVYRYLQESGFSHSAFTFGIESHISQ. The region spanning 41–86 is the F-box-like domain; that stretch reads GTLVPPSALISILQKGLQYVEAEISINKDGTVFDSRPIESLSLIVA. Lys102 carries the N6-acetyllysine modification. Ser130 is modified (phosphoserine). WD repeat units follow at residues 177-216, 233-272, 274-313, 316-354, 357-396, 399-447, 450-489, and 491-521; these read GHES…NGGS, PSNK…ASTL, QHKG…AKQQ, FHSA…PVKT, GHTN…CVHD, AHSK…CTHT, KHQE…LVHS, and QGTG…CVLD. Lys287 participates in a covalent cross-link: Glycyl lysine isopeptide (Lys-Gly) (interchain with G-Cter in SUMO2).

The protein belongs to the WD repeat EBI family. As to quaternary structure, probable component of the N-Cor repressor complex and some E3 ubiquitin ligase complex. Interacts with NCOR2. In terms of tissue distribution, fetal brain and prostate. Expressed in the cochlear spiral ganglion neurons, and in outer and inner hair cells.

It is found in the nucleus. Functionally, F-box-like protein involved in the recruitment of the ubiquitin/19S proteasome complex to nuclear receptor-regulated transcription units. Plays an essential role in transcription activation mediated by nuclear receptors. Probably acts as integral component of corepressor complexes that mediates the recruitment of the 19S proteasome complex, leading to the subsequent proteasomal degradation of transcription repressor complexes, thereby allowing cofactor exchange. The polypeptide is F-box-like/WD repeat-containing protein TBL1Y (TBL1Y) (Homo sapiens (Human)).